The sequence spans 494 residues: UDP-glucose 6-dehydrogenase (494 aa).

NAD(+) contacts are provided by residues 11–16, Asp-36, Arg-41, and 89–93; these read GAGYVG and VNTPT. A disordered region spans residues 88 to 110; the sequence is SVNTPTKTYGMGKGRAADLKYIE. N6-acetyllysine is present on Lys-107. Positions 129 to 135 are allosteric switch region; that stretch reads KSTVPVR. 130-132 is an NAD(+) binding site; the sequence is STV. Residue Glu-161 is the Proton donor/acceptor of the active site. Residues 161-165, 220-224, Arg-260, and 267-273 each bind substrate; these read EFLAE, KLTAN, and KASVGFG. Residue Glu-165 participates in NAD(+) binding. Lys-220 serves as the catalytic Proton donor/acceptor. Catalysis depends on Cys-276, which acts as the Nucleophile. Position 276 to 279 (276 to 279) interacts with NAD(+); it reads CFQK. The segment at 321–325 is important for formation of active hexamer structure; it reads SLFNT. 338-339 is a substrate binding site; it reads FK. Arg-346 contributes to the NAD(+) binding site. Residue Arg-442 coordinates substrate. A disordered region spans residues 466-494; sequence VSSKRIPYAPSGEIPKFSLQDMPNKKPRV. Ser-476 is modified (phosphoserine).

It belongs to the UDP-glucose/GDP-mannose dehydrogenase family. In terms of assembly, homohexamer.

It carries out the reaction UDP-alpha-D-glucose + 2 NAD(+) + H2O = UDP-alpha-D-glucuronate + 2 NADH + 3 H(+). The protein operates within nucleotide-sugar biosynthesis; UDP-alpha-D-glucuronate biosynthesis; UDP-alpha-D-glucuronate from UDP-alpha-D-glucose: step 1/1. UDP-alpha-D-xylose (UDX) acts as a feedback inhibitor. It binds at the same site as the substrate, but functions as allosteric inhibitor by triggering a conformation change that disrupts the active hexameric ring structure and gives rise to an inactive, horseshoe-shaped hexamer. Its function is as follows. Catalyzes the formation of UDP-alpha-D-glucuronate, a constituent of complex glycosaminoglycans. Required for the biosynthesis of chondroitin sulfate and heparan sulfate. Required for embryonic development via its role in the biosynthesis of glycosaminoglycans. Required for proper brain and neuronal development. The chain is UDP-glucose 6-dehydrogenase (UGDH) from Bos taurus (Bovine).